The sequence spans 518 residues: Probable thiamine biosynthetic bifunctional enzyme (518 aa).

Residues 1 to 229 form a thiamine-phosphate synthase region; that stretch reads MKRQIDYSLY…ATPPCFAQAR (229 aa). Residues 40-44 and Asn-72 each bind 4-amino-2-methyl-5-(diphosphooxymethyl)pyrimidine; that span reads QHREK. Asp-73 and Asp-92 together coordinate Mg(2+). Ser-111 contributes to the 4-amino-2-methyl-5-(diphosphooxymethyl)pyrimidine binding site. 2-[(2R,5Z)-2-carboxy-4-methylthiazol-5(2H)-ylidene]ethyl phosphate is bound at residue 137-139; it reads TNT. Position 140 (Lys-140) interacts with 4-amino-2-methyl-5-(diphosphooxymethyl)pyrimidine. Residues Gly-173 and 199 to 200 contribute to the 2-[(2R,5Z)-2-carboxy-4-methylthiazol-5(2H)-ylidene]ethyl phosphate site; that span reads VS. The tract at residues 230-518 is hydroxyethylthiazole kinase; it reads SSLTTPKDLL…IERAKLEKAE (289 aa). Met-281 provides a ligand contact to 5-(2-hydroxyethyl)-4-methylthiazole. Lys-355 and Ser-403 together coordinate ATP. Residue Ala-430 participates in 5-(2-hydroxyethyl)-4-methylthiazole binding. Cys-433 functions as the Proton acceptor; for hydroxyethylthiazole kinase activity in the catalytic mechanism.

It in the N-terminal section; belongs to the thiamine-phosphate synthase family. The protein in the C-terminal section; belongs to the Thz kinase family. Mg(2+) is required as a cofactor.

The enzyme catalyses 2-[(2R,5Z)-2-carboxy-4-methylthiazol-5(2H)-ylidene]ethyl phosphate + 4-amino-2-methyl-5-(diphosphooxymethyl)pyrimidine + 2 H(+) = thiamine phosphate + CO2 + diphosphate. The catalysed reaction is 2-(2-carboxy-4-methylthiazol-5-yl)ethyl phosphate + 4-amino-2-methyl-5-(diphosphooxymethyl)pyrimidine + 2 H(+) = thiamine phosphate + CO2 + diphosphate. It catalyses the reaction 4-methyl-5-(2-phosphooxyethyl)-thiazole + 4-amino-2-methyl-5-(diphosphooxymethyl)pyrimidine + H(+) = thiamine phosphate + diphosphate. It carries out the reaction 5-(2-hydroxyethyl)-4-methylthiazole + ATP = 4-methyl-5-(2-phosphooxyethyl)-thiazole + ADP + H(+). It participates in cofactor biosynthesis; thiamine diphosphate biosynthesis; 4-methyl-5-(2-phosphoethyl)-thiazole from 5-(2-hydroxyethyl)-4-methylthiazole: step 1/1. It functions in the pathway cofactor biosynthesis; thiamine diphosphate biosynthesis; thiamine phosphate from 4-amino-2-methyl-5-diphosphomethylpyrimidine and 4-methyl-5-(2-phosphoethyl)-thiazole: step 1/1. Functionally, condenses 4-methyl-5-(beta-hydroxyethyl)thiazole monophosphate (THZ-P) and 2-methyl-4-amino-5-hydroxymethyl pyrimidine pyrophosphate (HMP-PP) to form thiamine monophosphate (TMP). The sequence is that of Probable thiamine biosynthetic bifunctional enzyme (thi4) from Schizosaccharomyces pombe (strain 972 / ATCC 24843) (Fission yeast).